Consider the following 281-residue polypeptide: Fructose-bisphosphate aldolase class 1 (281 aa).

Lys191 (schiff-base intermediate with dihydroxyacetone-P) is an active-site residue.

This sequence belongs to the DeoC/FbaB aldolase family. As to quaternary structure, homooctamer.

It localises to the cytoplasm. The protein resides in the chromosome. The enzyme catalyses beta-D-fructose 1,6-bisphosphate = D-glyceraldehyde 3-phosphate + dihydroxyacetone phosphate. With respect to regulation, activated by citrate. The chain is Fructose-bisphosphate aldolase class 1 (fba) from Thermococcus kodakarensis (strain ATCC BAA-918 / JCM 12380 / KOD1) (Pyrococcus kodakaraensis (strain KOD1)).